Consider the following 160-residue polypeptide: Surface-adhesin protein E (160 aa).

The signal sequence occupies residues 1 to 15 (MKKIILTLSLGLLTA). The N-palmitoyl cysteine moiety is linked to residue Cys16. The S-diacylglycerol cysteine moiety is linked to residue Cys16. The interaction with laminin and plasminogen stretch occupies residues 41-68 (IRLVKNVNYYIDSESIWVDNQEPQIVHF). The interval 84 to 108 (PKRYARSVRQYKILNCANYHLTQVR) is interaction with vitronectin and epithelial cells.

Homodimer. Interacts with host vitronectin, laminin and plasminogen. Can interact with both immobilized and soluble vitronectin.

The protein resides in the cell outer membrane. It is found in the cell surface. In terms of biological role, acts as a multifunctional adhesin involved in direct interactions with host epithelial cells and host proteins, including vitronectin, laminin and plasminogen. In addition, interaction with serum vitronectin plays an important role in bacterial serum resistance, and conversion of plasminogen to plasmin at the cell surface aids in immune evasion and contributes to bacterial virulence. Induces a pro-inflammatory epithelial cell response, leading to interleukin-8 (IL-8) secretion and up-regulation of ICAM1. This Haemophilus influenzae (strain NTHi 3655) protein is Surface-adhesin protein E (pe).